The chain runs to 480 residues: Adenosylhomocysteinase (480 aa).

Substrate-binding residues include threonine 63, aspartate 142, and glutamate 203. NAD(+) is bound at residue 204–206 (TTT). The substrate site is built by lysine 233 and aspartate 237. NAD(+) contacts are provided by residues asparagine 238, 267 to 272 (GYGDVG), glutamate 290, asparagine 325, 346 to 348 (IGH), and asparagine 394.

Belongs to the adenosylhomocysteinase family. NAD(+) is required as a cofactor.

The protein resides in the cytoplasm. The enzyme catalyses S-adenosyl-L-homocysteine + H2O = L-homocysteine + adenosine. It functions in the pathway amino-acid biosynthesis; L-homocysteine biosynthesis; L-homocysteine from S-adenosyl-L-homocysteine: step 1/1. Its function is as follows. May play a key role in the regulation of the intracellular concentration of adenosylhomocysteine. This is Adenosylhomocysteinase from Xylella fastidiosa (strain Temecula1 / ATCC 700964).